The chain runs to 236 residues: MTRRYWNINLEEMLEAGVHFGHGTRKWNPRMAPYISAKRKGIHITNLTRTARSLSEACDLVFDAASRGKHFLIVGTKDKAADSVASAAIRARCHYVNKKWLGGMLTNWFTTETRLHKFRDLRAEQKTGRLNRLPKRDAAMLKRKLSHLQAYLGGIKYMTGLPDIVIIIDQQEEYTAIRECATLGIPTICLIDTNCDPDLADIPIPANDDAIASIRLILNKLVSAICEGRSSYIRNH.

The protein belongs to the universal ribosomal protein uS2 family.

The protein localises to the plastid. The protein resides in the chloroplast. In Illicium oligandrum (Star anise), this protein is Small ribosomal subunit protein uS2c (rps2).